The chain runs to 96 residues: Essential MCU regulator, mitochondrial (96 aa).

The N-terminal 34 residues, 1-34, are a transit peptide targeting the mitochondrion; that stretch reads MIVSRLTFPLQAAKLVARKAAGNPSNSIIQRRHM. Residues 52-72 form a helical membrane-spanning segment; that stretch reads PFGLFAIFCAVIPGLFIGATI.

This sequence belongs to the SMDT1/EMRE family.

The protein resides in the mitochondrion inner membrane. Its function is as follows. Essential regulatory subunit of the mitochondrial calcium uniporter (mcu) channel, a protein that mediates calcium uptake into mitochondria. The protein is Essential MCU regulator, mitochondrial of Drosophila pseudoobscura pseudoobscura (Fruit fly).